We begin with the raw amino-acid sequence, 821 residues long: Phenylalanine--tRNA ligase beta subunit (821 aa).

Residues 39-149 form the tRNA-binding domain; the sequence is SENVKGIVLG…EDIALNHNLG (111 aa). Positions 414–507 constitute a B5 domain; the sequence is LKKILIPLRR…RLIGYDMFDL (94 aa). Residues D485, D491, E494, and E495 each coordinate Mg(2+). Residues 727–820 enclose the FDX-ACB domain; sequence PTVPKMERDI…IEKKFSTKLR (94 aa).

It belongs to the phenylalanyl-tRNA synthetase beta subunit family. Type 1 subfamily. Tetramer of two alpha and two beta subunits. Mg(2+) serves as cofactor.

It is found in the cytoplasm. It carries out the reaction tRNA(Phe) + L-phenylalanine + ATP = L-phenylalanyl-tRNA(Phe) + AMP + diphosphate + H(+). The sequence is that of Phenylalanine--tRNA ligase beta subunit from Prochlorococcus marinus subsp. pastoris (strain CCMP1986 / NIES-2087 / MED4).